Reading from the N-terminus, the 248-residue chain is tRNA (guanine-N(1)-)-methyltransferase (248 aa).

S-adenosyl-L-methionine-binding positions include G114 and 134-139 (IGDYVL).

Belongs to the RNA methyltransferase TrmD family. Homodimer.

It localises to the cytoplasm. It catalyses the reaction guanosine(37) in tRNA + S-adenosyl-L-methionine = N(1)-methylguanosine(37) in tRNA + S-adenosyl-L-homocysteine + H(+). Its function is as follows. Specifically methylates guanosine-37 in various tRNAs. This Blochmanniella floridana protein is tRNA (guanine-N(1)-)-methyltransferase.